A 1086-amino-acid chain; its full sequence is NAD(P) transhydrogenase, mitochondrial (1086 aa).

The transit peptide at 1–43 (MANLLKTVVTGCSCPLLSNLGSCKGLRVKKDFLRTFYTHQELW) directs the protein to the mitochondrion. Over 44 to 474 (CKAPVKPGIP…TITPFRKTMS (431 aa)) the chain is Mitochondrial matrix. Lys70 bears the N6-acetyllysine mark. N6-succinyllysine is present on Lys117. 182–184 (RVT) contacts NAD(+). N6-succinyllysine is present on Lys224. Residues Val237, 257–259 (DTR), and Gly287 contribute to the NAD(+) site. At Lys294 the chain carries N6-succinyllysine. NAD(+) contacts are provided by Glu300 and Leu319. N6-succinyllysine is present on Lys331. N6-acetyllysine is present on Lys397. The next 4 membrane-spanning stretches (helical) occupy residues 475–493 (TASAYTAGLTGILGLGIAA), 501–521 (MVTTFGLAGIVGYHTVWGVTP), 527–546 (LMSVTNAISGLTAVGGLALM), and 558–578 (GLAALAAFISSVNIAGGFLVT). Over 579-595 (QRMLDMFKRPTDPPEYN) the chain is Mitochondrial matrix. A run of 5 helical transmembrane segments spans residues 596-616 (YLYLLPAGTFVGGYLAALYSG), 622-642 (IMYLGSGLCCVGALAGLSTQG), 646-666 (LGNALGMIGVAGGLAATLGVL), 672-691 (LLAQMSGAMALGGTIGLTIA), and 702-722 (LVAAFHSLVGLAAVLTCIAEY). The Cytoplasmic portion of the chain corresponds to 723-739 (IIEYPHFATDAAANLTK). The next 5 membrane-spanning stretches (helical) occupy residues 740–760 (IVAYLGTYIGGVTFSGSLIAY), 778–797 (HLLNAGLLAASVGGIIPFMV), 801–819 (FTTGITCLGSVSALSAVMG), 833–853 (VVITVLNSYSGWALCAEGFLL), and 857–879 (LLTIVGALIGSSGAILSYIMCVA). At 880–1086 (MNRSLANVIL…QAKVRESYQK (207 aa)) the chain is on the mitochondrial matrix side. NADP(+) is bound by residues Tyr933, 965–970 (VAGRMP), 1007–1011 (GANDT), 1026–1027 (GM), 1042–1049 (KRSLGVGY), and 1068–1069 (DA). The residue at position 1079 (Lys1079) is an N6-succinyllysine.

This sequence in the N-terminal section; belongs to the AlaDH/PNT family. In the C-terminal section; belongs to the PNT beta subunit family. In terms of assembly, homodimer. Widely expressed with expression most readily detectable in adrenal, heart, kidney, thyroid and adipose tissues.

The protein resides in the mitochondrion inner membrane. It carries out the reaction NAD(+) + NADPH + H(+)(in) = NADH + NADP(+) + H(+)(out). The transhydrogenation between NADH and NADP is coupled to respiration and ATP hydrolysis and functions as a proton pump across the membrane. May play a role in reactive oxygen species (ROS) detoxification in the adrenal gland. The sequence is that of NAD(P) transhydrogenase, mitochondrial (NNT) from Homo sapiens (Human).